The chain runs to 454 residues: Guanine deaminase (454 aa).

Residues H82 and H84 each coordinate Zn(2+). Residues 84–87, 213–214, 240–243, and D330 contribute to the substrate site; these read HAPQ, RF, and HISE. H240 and D330 together coordinate Zn(2+). S453 is subject to Phosphoserine.

This sequence belongs to the metallo-dependent hydrolases superfamily. ATZ/TRZ family. Homodimer. Zn(2+) is required as a cofactor.

The enzyme catalyses guanine + H2O + H(+) = xanthine + NH4(+). Its pathway is purine metabolism; guanine degradation; xanthine from guanine: step 1/1. Functionally, catalyzes the hydrolytic deamination of guanine, producing xanthine and ammonia. The chain is Guanine deaminase from Mus musculus (Mouse).